Consider the following 342-residue polypeptide: MKVDLFDFELPERLIAQVPLEQRDASRLMVLDKHTGELTDSSFKHIISFFNEGDCLVLNNTRVLPARLFGTKEDTGAKVELLLLKQETGDKWETLAKPAKRVKKGTVVTFGDGRLKAICTEELEHGGRKMEFQYDGIFYEVLESLGEMPLPPYIKEQLDDKERYQTVYSKEIGSAAAPTAGLHFTEEILQQLKDKGVQIEFITLHVGLGTFRPVSADEVEEHNMHAEFYQMSEETAAALNKVRENGGRIISVGTTSTRTLETIAGEHDGQFKASSGWTSIFIYPGYEFKAIDGMITNFHLPKSSLIMLVSALAGRENILRAYNHAVEEEYRFFSFGDAMLII.

This sequence belongs to the QueA family. In terms of assembly, monomer.

The protein resides in the cytoplasm. It catalyses the reaction 7-aminomethyl-7-carbaguanosine(34) in tRNA + S-adenosyl-L-methionine = epoxyqueuosine(34) in tRNA + adenine + L-methionine + 2 H(+). The protein operates within tRNA modification; tRNA-queuosine biosynthesis. Transfers and isomerizes the ribose moiety from AdoMet to the 7-aminomethyl group of 7-deazaguanine (preQ1-tRNA) to give epoxyqueuosine (oQ-tRNA). The sequence is that of S-adenosylmethionine:tRNA ribosyltransferase-isomerase from Bacillus subtilis (strain 168).